Consider the following 242-residue polypeptide: tRNA (guanine-N(1)-)-methyltransferase (242 aa).

S-adenosyl-L-methionine is bound by residues glycine 111 and 130-135 (IGDYVL).

This sequence belongs to the RNA methyltransferase TrmD family. Homodimer.

The protein localises to the cytoplasm. It carries out the reaction guanosine(37) in tRNA + S-adenosyl-L-methionine = N(1)-methylguanosine(37) in tRNA + S-adenosyl-L-homocysteine + H(+). In terms of biological role, specifically methylates guanosine-37 in various tRNAs. The protein is tRNA (guanine-N(1)-)-methyltransferase of Onion yellows phytoplasma (strain OY-M).